Here is a 179-residue protein sequence, read N- to C-terminus: Bifunctional protein PyrR (179 aa).

A PRPP-binding motif is present at residues 100 to 112 (VILVDDVLFTGRT).

This sequence belongs to the purine/pyrimidine phosphoribosyltransferase family. PyrR subfamily.

It carries out the reaction UMP + diphosphate = 5-phospho-alpha-D-ribose 1-diphosphate + uracil. Regulates the transcription of the pyrimidine nucleotide (pyr) operon in response to exogenous pyrimidines. Its function is as follows. Also displays a weak uracil phosphoribosyltransferase activity which is not physiologically significant. This Haemophilus influenzae (strain 86-028NP) protein is Bifunctional protein PyrR.